Consider the following 505-residue polypeptide: Sodium-coupled neutral amino acid transporter 3 (505 aa).

The disordered stretch occupies residues 27–48 (VPTTDTQRTEDTQHCGEGKGFL). The span at 33–43 (QRTEDTQHCGE) shows a compositional bias: basic and acidic residues. N-linked (GlcNAc...) asparagine glycosylation occurs at asparagine 73. Helical transmembrane passes span 82 to 102 (GILG…LFLL), 105 to 125 (VALL…IVGI), 143 to 163 (AAAL…LYII), 186 to 206 (MDGN…LALM), and 212 to 232 (LGYS…AVIY). An intrachain disulfide couples cysteine 239 to cysteine 276. Residues asparagine 247 and asparagine 251 are each glycosylated (N-linked (GlcNAc...) asparagine). A helical membrane pass occupies residues 288–308 (AYTIPIMAFAFVCHPEVLPIY). The N-linked (GlcNAc...) asparagine glycan is linked to asparagine 324. 5 consecutive transmembrane segments (helical) span residues 325-345 (LSIA…YLTF), 367-387 (ILCV…IVLF), 409-429 (VLIA…APNI), 432-452 (IFGI…PAIF), and 472-492 (ALCF…FIII).

Belongs to the amino acid/polyamine transporter 2 family. In terms of tissue distribution, expressed predominantly in liver, moderately expressed in kidney and brain, and barely detectable in heart and muscle. Within liver, expressed in hepatocytes. Not detected in testis. Expressed in cells of the ganglion cell layer, in soma of some cells of the inner nuclear layer (at protein level). Expressed in the inner segments of photoreceptor cells.

The protein resides in the cell membrane. It localises to the basolateral cell membrane. The catalysed reaction is L-histidine(out) + Na(+)(out) + H(+)(in) = L-histidine(in) + Na(+)(in) + H(+)(out). It carries out the reaction L-glutamine(out) + Na(+)(out) + H(+)(in) = L-glutamine(in) + Na(+)(in) + H(+)(out). It catalyses the reaction L-asparagine(out) + Na(+)(out) + H(+)(in) = L-asparagine(in) + Na(+)(in) + H(+)(out). Symporter that cotransports specific neutral amino acids and sodium ions, coupled to an H(+) antiporter activity. Mainly participates in the glutamate-GABA-glutamine cycle in brain where it transports L-glutamine from astrocytes in the intercellular space for the replenishment of both neurotransmitters glutamate and gamma-aminobutyric acid (GABA) in neurons and also functions as the major influx transporter in ganglion cells mediating the uptake of glutamine. The transport activity is specific for L-glutamine, L-histidine and L-asparagine. The transport is electroneutral coupled to the cotransport of 1 Na(+) and the antiport of 1 H(+). The transport is pH dependent, saturable, Li(+) tolerant and functions in both direction depending on the concentration gradients of its substrates and cotransported ions. Also mediates an amino acid-gated H(+) conductance that is not stoichiometrically coupled to the amino acid transport but which influences the ionic gradients that drive the amino acid transport. In addition, may play a role in nitrogen metabolism, amino acid homeostasis, glucose metabolism and renal ammoniagenesis. This chain is Sodium-coupled neutral amino acid transporter 3, found in Mus musculus (Mouse).